The following is a 191-amino-acid chain: dCTP deaminase (191 aa).

DCTP is bound by residues 112–117 (KSTYAR), 136–138 (TLE), Gln157, Tyr173, and Gln183. Residue Glu138 is the Proton donor/acceptor of the active site.

Belongs to the dCTP deaminase family. In terms of assembly, homotrimer.

The catalysed reaction is dCTP + H2O + H(+) = dUTP + NH4(+). The protein operates within pyrimidine metabolism; dUMP biosynthesis; dUMP from dCTP (dUTP route): step 1/2. Its function is as follows. Catalyzes the deamination of dCTP to dUTP. The chain is dCTP deaminase from Psychrobacter cryohalolentis (strain ATCC BAA-1226 / DSM 17306 / VKM B-2378 / K5).